A 340-amino-acid chain; its full sequence is MVTTMKEVAERAGVSKSTVSQFLQKRYNYMSENTKKKIEQAIEDLSYIPNEVARSLKQKKTFIVGVISSTILSRFTTEVVRAIEDECQLENVQVIVCNTDDDSLKEKKYVQSMIARQVDGLIIFPTEENKKLYVSLVKNGYPFVFVDRKIDELSVDTVLLNNEKASRACVEALIEHGHNNIGIITFPLGKKAITTRSERLSGYRNTLGKHDIPVNENYIKSGRLDEMPNLIGQLFHMENPPTAIIATNDMILEQVLIYAKNNHLTIPNDFSLIGIDDVSFASFYNPPITTVSQPSFEMGKRSARLLLEKIDQKEQDHEELSEIIRMNPVINHRESVLKLN.

The region spanning 1-58 (MVTTMKEVAERAGVSKSTVSQFLQKRYNYMSENTKKKIEQAIEDLSYIPNEVARSLKQ) is the HTH lacI-type domain. Positions 5–24 (MKEVAERAGVSKSTVSQFLQ) form a DNA-binding region, H-T-H motif.

Functionally, putative repressor of the endoglucanase operon. The protein is Probable HTH-type transcriptional regulator EndR (endR) of Paenibacillus polymyxa (Bacillus polymyxa).